A 122-amino-acid polypeptide reads, in one-letter code: Acidic phospholipase A2 (122 aa).

7 disulfide bridges follow: C26–C115, C28–C44, C43–C95, C49–C122, C50–C88, C57–C81, and C75–C86. Residues Y27, G29, and G31 each contribute to the Ca(2+) site. Residue H47 is part of the active site. Residue D48 coordinates Ca(2+). Residue D89 is part of the active site.

The protein belongs to the phospholipase A2 family. Group II subfamily. D49 sub-subfamily. The cofactor is Ca(2+). In terms of processing, contains 7 disulfide bonds. As to expression, expressed by the venom gland.

It is found in the secreted. The catalysed reaction is a 1,2-diacyl-sn-glycero-3-phosphocholine + H2O = a 1-acyl-sn-glycero-3-phosphocholine + a fatty acid + H(+). Snake venom phospholipase A2 (PLA2) that displays low systemic toxicity and causes severe symptoms only at very high concentrations (15 mg/kg). Has neither coagulant nor anticoagulant activity. PLA2 catalyzes the calcium-dependent hydrolysis of the 2-acyl groups in 3-sn-phosphoglycerides. The polypeptide is Acidic phospholipase A2 (Bothrops ammodytoides (Yararanata)).